We begin with the raw amino-acid sequence, 228 residues long: Aquaporin Z (228 aa).

Helical transmembrane passes span 1–21 (MLNK…GGCG) and 23–43 (AILA…ALAF). The NPA 1 motif lies at 63–65 (NPA). Helical transmembrane passes span 82–102 (IPYW…LYVI), 129–149 (MMAG…IILG), and 154–174 (LAPA…IHLV). Positions 184 to 186 (NPA) match the NPA 2 motif. A helical membrane pass occupies residues 205–225 (LFWVAPLVGAVIGAIIWKGLL).

The protein belongs to the MIP/aquaporin (TC 1.A.8) family. As to quaternary structure, homotetramer.

It is found in the cell inner membrane. It carries out the reaction H2O(in) = H2O(out). Channel that permits osmotically driven movement of water in both directions. It is involved in the osmoregulation and in the maintenance of cell turgor during volume expansion in rapidly growing cells. It mediates rapid entry or exit of water in response to abrupt changes in osmolarity. This chain is Aquaporin Z, found in Brucella melitensis biotype 1 (strain ATCC 23456 / CCUG 17765 / NCTC 10094 / 16M).